The chain runs to 29 residues: Cyclotide mela-1 (29 aa).

Positions 1–29 form a cross-link, cyclopeptide (Gly-Asp); the sequence is GKYTCGETCFKGKCYTPGCTCSYPICKKD. 3 cysteine pairs are disulfide-bonded: cysteine 5/cysteine 19, cysteine 9/cysteine 21, and cysteine 14/cysteine 26.

This is a cyclic peptide. In terms of processing, contains 3 disulfide bonds.

Functionally, probably participates in a plant defense mechanism (Potential). Binds to and induces leakage in phospholipd membranes, particularly ones containing 1-palmitoyl-2-oleophosphatidylethanolamine (POPE). In vitro, displays cytotoxicity against cultured cells but no hemolytic activity towards fresh erythrocytes. Not active against Gram-negative bacterium E.coli ATCC 25922 or Gram-positive bacterium S.aureus ATCC 25923 up to a concentration of 64 uM. The polypeptide is Cyclotide mela-1 (Melicytus latifolius (Norfolk Island mahoe)).